The sequence spans 218 residues: 3-dehydroquinate dehydratase (218 aa).

3-dehydroquinate-binding positions include 29–31 and R56; that span reads EFR. The active-site Proton donor/acceptor is H116. The active-site Schiff-base intermediate with substrate is K142. The 3-dehydroquinate site is built by R180, S200, and Q204.

It belongs to the type-I 3-dehydroquinase family. In terms of assembly, homodimer.

The catalysed reaction is 3-dehydroquinate = 3-dehydroshikimate + H2O. It functions in the pathway metabolic intermediate biosynthesis; chorismate biosynthesis; chorismate from D-erythrose 4-phosphate and phosphoenolpyruvate: step 3/7. Functionally, involved in the third step of the chorismate pathway, which leads to the biosynthesis of aromatic amino acids. Catalyzes the cis-dehydration of 3-dehydroquinate (DHQ) and introduces the first double bond of the aromatic ring to yield 3-dehydroshikimate. The sequence is that of 3-dehydroquinate dehydratase from Methanococcus vannielii (strain ATCC 35089 / DSM 1224 / JCM 13029 / OCM 148 / SB).